A 488-amino-acid chain; its full sequence is NADH-quinone oxidoreductase subunit N 2 (488 aa).

14 helical membrane-spanning segments follow: residues 18-38, 45-65, 81-101, 110-130, 135-155, 169-189, 210-230, 242-262, 274-294, 308-328, 331-351, 375-395, 412-434, and 458-478; these read FLPE…ELFI, LVLN…LLIP, PLAV…LPFA, SFYG…FVLA, LIIL…LTAL, YLIL…FMYI, LVLG…AVPF, PTPV…IPLV, LVWT…GNLV, SSIA…VIGM, VIYF…VLAL, IAFA…TVGF, WLAF…LVVV, and FALT…WFLI.

The protein belongs to the complex I subunit 2 family. NDH-1 is composed of 14 different subunits. Subunits NuoA, H, J, K, L, M, N constitute the membrane sector of the complex.

It is found in the cell inner membrane. The catalysed reaction is a quinone + NADH + 5 H(+)(in) = a quinol + NAD(+) + 4 H(+)(out). NDH-1 shuttles electrons from NADH, via FMN and iron-sulfur (Fe-S) centers, to quinones in the respiratory chain. The immediate electron acceptor for the enzyme in this species is believed to be ubiquinone. Couples the redox reaction to proton translocation (for every two electrons transferred, four hydrogen ions are translocated across the cytoplasmic membrane), and thus conserves the redox energy in a proton gradient. The polypeptide is NADH-quinone oxidoreductase subunit N 2 (Aquifex aeolicus (strain VF5)).